A 141-amino-acid chain; its full sequence is MAKKVVAIIKLALPAGKANPAPPVGPALGQHGVNIMAFCKDYNAKTADQAGMIIPVEISVFEDRSFTFVLKTPPASVLIRKAAGVERGSNEPNKKFVATITRDQLREIAQTKMPDLNANDIEAAMNIVAGTARNMGVKISD.

This sequence belongs to the universal ribosomal protein uL11 family. Part of the ribosomal stalk of the 50S ribosomal subunit. Interacts with L10 and the large rRNA to form the base of the stalk. L10 forms an elongated spine to which L12 dimers bind in a sequential fashion forming a multimeric L10(L12)X complex. One or more lysine residues are methylated.

In terms of biological role, forms part of the ribosomal stalk which helps the ribosome interact with GTP-bound translation factors. The protein is Large ribosomal subunit protein uL11 of Microcystis aeruginosa (strain NIES-843 / IAM M-2473).